A 59-amino-acid chain; its full sequence is Embryonic testis differentiation protein (59 aa).

The segment at 1–28 is disordered; it reads MDEKNPEAVPRPPEQNTELVPPKKSKSK.

In terms of tissue distribution, specifically expressed in testis.

In Mus musculus (Mouse), this protein is Embryonic testis differentiation protein.